A 118-amino-acid chain; its full sequence is BLOC-1-related complex subunit 8 (118 aa).

The segment covering 98–107 has biased composition (polar residues); that stretch reads KEQISNSQGR. Residues 98–118 are disordered; the sequence is KEQISNSQGRSPHVSAPSASS.

The protein belongs to the BORCS8 family.

It is found in the lysosome membrane. Functionally, as part of a BORC-like complex, it may play a role in the movement and localization of lysosomes at the cell periphery. Associated with the cytosolic face of lysosomes, this complex may couple lysosomes to microtubule plus-end-directed kinesin motors, driving lysosome movement toward the cell periphery. This Tetraodon nigroviridis (Spotted green pufferfish) protein is BLOC-1-related complex subunit 8.